The primary structure comprises 198 residues: Thymidine kinase (198 aa).

ATP is bound by residues G16–S23 and E89–Q92. E90 functions as the Proton acceptor in the catalytic mechanism. Zn(2+) is bound by residues C146, C149, C184, and C187.

The protein belongs to the thymidine kinase family. In terms of assembly, homotetramer.

The protein resides in the cytoplasm. It carries out the reaction thymidine + ATP = dTMP + ADP + H(+). The chain is Thymidine kinase from Dictyoglomus thermophilum (strain ATCC 35947 / DSM 3960 / H-6-12).